Consider the following 386-residue polypeptide: Homoserine O-succinyltransferase (386 aa).

An AB hydrolase-1 domain is found at 49 to 358 (NAILICHALS…DAEQGHDSFL (310 aa)). Residue serine 156 is the Nucleophile of the active site. Arginine 226 is a binding site for substrate. Active-site residues include aspartate 321 and histidine 354. A substrate-binding site is contributed by aspartate 355.

It belongs to the AB hydrolase superfamily. MetX family. In terms of assembly, homodimer.

It is found in the cytoplasm. The catalysed reaction is L-homoserine + succinyl-CoA = O-succinyl-L-homoserine + CoA. The protein operates within amino-acid biosynthesis; L-methionine biosynthesis via de novo pathway; O-succinyl-L-homoserine from L-homoserine: step 1/1. Functionally, transfers a succinyl group from succinyl-CoA to L-homoserine, forming succinyl-L-homoserine. This is Homoserine O-succinyltransferase from Acinetobacter baumannii (strain SDF).